Here is a 254-residue protein sequence, read N- to C-terminus: Mamu class II histocompatibility antigen, DR alpha chain (254 aa).

An N-terminal signal peptide occupies residues 1–25 (MAESGVPVLGFFIIAVLMSAQESWA). Positions 26-109 (IKEEHVIIQA…KRSNNTPITN (84 aa)) are alpha-1. The Extracellular portion of the chain corresponds to 26 to 216 (IKEEHVIIQA…APSPLPETTE (191 aa)). Residue Asn103 is glycosylated (N-linked (GlcNAc...) asparagine). The segment at 110 to 203 (VPPEVTVLTN…CLDAPLLKHW (94 aa)) is alpha-2. The Ig-like C1-type domain occupies 112 to 204 (PEVTVLTNSP…LDAPLLKHWE (93 aa)). Cys132 and Cys188 form a disulfide bridge. Residues 204–216 (EFDAPSPLPETTE) form a connecting peptide region. The helical transmembrane segment at 217–239 (NVVCALGLIVGLVGIIVGTVFII) threads the bilayer. The Cytoplasmic segment spans residues 240–254 (KGVRKSNAAERRGPL). Lys244 is covalently cross-linked (Glycyl lysine isopeptide (Lys-Gly) (interchain with G-Cter in ubiquitin)).

It belongs to the MHC class II family. In terms of assembly, heterodimer of an alpha chain and a beta chain.

The protein resides in the membrane. The polypeptide is Mamu class II histocompatibility antigen, DR alpha chain (Mamu-DRA) (Macaca mulatta (Rhesus macaque)).